We begin with the raw amino-acid sequence, 871 residues long: Zinc finger protein 473 (871 aa).

A KRAB domain is found at 6-75; it reads VTLKDVGMDF…AGGSPEATSP (70 aa). Disordered stretches follow at residues 47–81 and 140–164; these read PPRP…TETK and NGES…TVST. A compositionally biased stretch (polar residues) spans 71-81; sequence EATSPDVTETK. Basic and acidic residues predominate over residues 145-154; the sequence is TECKSHELKR. Lys148 participates in a covalent cross-link: Glycyl lysine isopeptide (Lys-Gly) (interchain with G-Cter in SUMO2). Residues 209 to 231 form a C2H2-type 1 zinc finger; the sequence is YQCSECGKSFSGSYRLTQHWITH. The C2H2-type 2; degenerate zinc finger occupies 265–286; the sequence is YVCNEYGTTFSQSTYLWHQKTH. Positions 290-317 are enriched in basic and acidic residues; that stretch reads KPCKSQDSDHPPSHDTQPGEHQKTHTDS. The disordered stretch occupies residues 290–318; sequence KPCKSQDSDHPPSHDTQPGEHQKTHTDSK. The tract at residues 312–552 is interaction with SLBP/pre-mRNA complex; the sequence is KTHTDSKSYN…GFFVSGKILD (241 aa). 3 C2H2-type zinc fingers span residues 320–342, 347–369, and 375–397; these read YNCN…QKIH, YECS…QKTH, and SECQ…QALH. The C2H2-type 6; degenerate zinc finger occupies 403 to 425; the sequence is YKCNERGKSFRHNSTLKIHQRVH. Residue Lys419 forms a Glycyl lysine isopeptide (Lys-Gly) (interchain with G-Cter in SUMO2) linkage. 4 consecutive C2H2-type zinc fingers follow at residues 431-453, 459-481, 487-509, and 515-537; these read YKCS…RRIH, HKCQ…QAIH, YSCA…QKMH, and YECQ…ESVH. Residues Lys549 and Lys558 each participate in a glycyl lysine isopeptide (Lys-Gly) (interchain with G-Cter in SUMO2) cross-link. 2 consecutive C2H2-type zinc fingers follow at residues 562–584 and 591–613; these read FKCN…ERIH and FECD…QRIH. A Glycyl lysine isopeptide (Lys-Gly) (interchain with G-Cter in SUMO2) cross-link involves residue Lys635. C2H2-type zinc fingers lie at residues 646–668, 674–696, 702–724, 730–752, 758–780, 786–808, 814–836, and 842–864; these read FKCN…QLIH, FKCS…ERTH, LVCN…QRIH, YVCD…QRIH, YVCQ…RRVH, YRCG…QRIH, YSCN…LRVH, and YQCQ…QRVH.

The protein belongs to the krueppel C2H2-type zinc-finger protein family. In terms of assembly, interacts with the SLBP/pre-mRNA complex but not with SLBP alone. Interacts with LSM11 in a U7 snRNP-dependent manner.

The protein localises to the nucleus. In terms of biological role, involved in histone 3'-end pre-mRNA processing by associating with U7 snRNP and interacting with SLBP/pre-mRNA complex. Increases histone 3'-end pre-mRNA processing but has no effect on U7 snRNP levels, when overexpressed. Required for cell cycle progression from G1 to S phases. This chain is Zinc finger protein 473 (ZNF473), found in Homo sapiens (Human).